The following is a 240-amino-acid chain: Flavin-dependent thymidylate synthase (240 aa).

The region spanning isoleucine 13 to glutamine 235 is the ThyX domain. FAD-binding positions include serine 64, arginine 87–arginine 89, and glutamate 95. DUMP-binding positions include glutamate 84–arginine 87, glutamate 95–arginine 99, and arginine 167. A ThyX motif motif is present at residues arginine 87–serine 97. Residues asparagine 183–arginine 185 and asparagine 189 each bind FAD. Arginine 194 lines the dUMP pocket. Arginine 194 (involved in ionization of N3 of dUMP, leading to its activation) is an active-site residue.

It belongs to the thymidylate synthase ThyX family. As to quaternary structure, homotetramer. Requires FAD as cofactor.

The enzyme catalyses dUMP + (6R)-5,10-methylene-5,6,7,8-tetrahydrofolate + NADPH + H(+) = dTMP + (6S)-5,6,7,8-tetrahydrofolate + NADP(+). It functions in the pathway pyrimidine metabolism; dTTP biosynthesis. Its function is as follows. Catalyzes the reductive methylation of 2'-deoxyuridine-5'-monophosphate (dUMP) to 2'-deoxythymidine-5'-monophosphate (dTMP) while utilizing 5,10-methylenetetrahydrofolate (mTHF) as the methyl donor, and NADPH and FADH(2) as the reductant. The sequence is that of Flavin-dependent thymidylate synthase from Tropheryma whipplei (strain TW08/27) (Whipple's bacillus).